The chain runs to 208 residues: MPTQASQKRWKQILQSIYDAIEDHGYPPTVREIGKSVGLSSSSTVAAYLEKLLAAGLIAKDPAKPRTLEVTSAGRDFIGVQDHGIPIVGTVAAGVPITAIENIDDYFPVPDDLPYAADELFMLRVQGNSMIKIGILDGDQIIVKKQNDAENGQIVVAMTEEDEATVKRFYKEKNGIRLHPENDSMDDMFFPDVTILGIVVSLYRPALV.

The H-T-H motif DNA-binding region spans V30–E50. Catalysis depends on for autocatalytic cleavage activity residues S129 and K167.

The protein belongs to the peptidase S24 family. In terms of assembly, homodimer.

It catalyses the reaction Hydrolysis of Ala-|-Gly bond in repressor LexA.. In terms of biological role, represses a number of genes involved in the response to DNA damage (SOS response), including recA and lexA. In the presence of single-stranded DNA, RecA interacts with LexA causing an autocatalytic cleavage which disrupts the DNA-binding part of LexA, leading to derepression of the SOS regulon and eventually DNA repair. The protein is LexA repressor of Lacticaseibacillus casei (strain BL23) (Lactobacillus casei).